The sequence spans 150 residues: D-aminoacyl-tRNA deacylase (150 aa).

The Gly-cisPro motif, important for rejection of L-amino acids motif lies at 138 to 139 (GP).

Belongs to the DTD family. Homodimer.

The protein resides in the cytoplasm. It catalyses the reaction glycyl-tRNA(Ala) + H2O = tRNA(Ala) + glycine + H(+). It carries out the reaction a D-aminoacyl-tRNA + H2O = a tRNA + a D-alpha-amino acid + H(+). An aminoacyl-tRNA editing enzyme that deacylates mischarged D-aminoacyl-tRNAs. Also deacylates mischarged glycyl-tRNA(Ala), protecting cells against glycine mischarging by AlaRS. Acts via tRNA-based rather than protein-based catalysis; rejects L-amino acids rather than detecting D-amino acids in the active site. By recycling D-aminoacyl-tRNA to D-amino acids and free tRNA molecules, this enzyme counteracts the toxicity associated with the formation of D-aminoacyl-tRNA entities in vivo and helps enforce protein L-homochirality. In Porphyromonas gingivalis (strain ATCC 33277 / DSM 20709 / CIP 103683 / JCM 12257 / NCTC 11834 / 2561), this protein is D-aminoacyl-tRNA deacylase.